A 1257-amino-acid chain; its full sequence is Protein flightless-1 homolog (1257 aa).

LRR repeat units follow at residues 6 to 31, 32 to 54, 56 to 77, 78 to 102, 103 to 126, 128 to 148, 149 to 172, 174 to 195, 197 to 221, 222 to 244, 246 to 267, 268 to 290, 292 to 315, 316 to 338, 339 to 361, and 363 to 384; these read LQFVKGIDFSGNDFSGDRFPHDVEQM, TQMTWLKLNDSKLEQVPDELSRC, NLEHLQMAHNQLISVHGELSDL, PRLRSVIVRDNNLKTAGIPTDIFRM, KDLTIIDLSRNQLREVPTNLEYAK, SIVLNLSYNNIETIPNSVCAN, LIDLLFLDLSNNKLDMLPPQIRRL, MLQSLKLSNNPLNHFQLKQLPS, TSLSVLHMSNTNRTLDNIPPTLDDM, HNLRDVDFSENNLPIVPEALFKL, NLRKLNLSGNKIEKLNMTEGEW, ENLETLNMSHNQLTVLPDCVVKL, RLTKLYAANNQLTFEGIPSGIGKL, IQLTVLHLSYNKLELVPEGISRC, VKLQKLKLDHNRLITLPEGIHLL, and DLKVLDLHENENLVMPPKPNDA. 4 Gelsolin-like repeats span residues 523-600, 640-714, 759-832, and 1168-1243; these read MDEA…EEFL, AVEM…PEFW, ELPK…MMFR, and EKTV…CRFR.

This sequence belongs to the villin/gelsolin family.

May play a key role in embryonic cellularization by interacting with both the cytoskeleton and other cellular components. In Caenorhabditis elegans, this protein is Protein flightless-1 homolog (fli-1).